The primary structure comprises 217 residues: Large ribosomal subunit protein uL4 (217 aa).

The tract at residues 42–100 is disordered; the sequence is RAAARQGTHSTKTRGDVSGGGRKPYRQKGTGRARQGSTRAPQFTGGGVVHGPKPRDYSQ.

The protein belongs to the universal ribosomal protein uL4 family. In terms of assembly, part of the 50S ribosomal subunit.

One of the primary rRNA binding proteins, this protein initially binds near the 5'-end of the 23S rRNA. It is important during the early stages of 50S assembly. It makes multiple contacts with different domains of the 23S rRNA in the assembled 50S subunit and ribosome. Its function is as follows. Forms part of the polypeptide exit tunnel. This is Large ribosomal subunit protein uL4 from Mycolicibacterium paratuberculosis (strain ATCC BAA-968 / K-10) (Mycobacterium paratuberculosis).